The sequence spans 386 residues: DNA replication and repair protein RecF (386 aa).

30–37 (GSNGFGKT) provides a ligand contact to ATP.

It belongs to the RecF family.

Its subcellular location is the cytoplasm. The RecF protein is involved in DNA metabolism; it is required for DNA replication and normal SOS inducibility. RecF binds preferentially to single-stranded, linear DNA. It also seems to bind ATP. This Mycolicibacterium vanbaalenii (strain DSM 7251 / JCM 13017 / BCRC 16820 / KCTC 9966 / NRRL B-24157 / PYR-1) (Mycobacterium vanbaalenii) protein is DNA replication and repair protein RecF.